The chain runs to 490 residues: Dual specificity protein kinase CLK3 (490 aa).

A disordered region spans residues 1-138 (MHHCKRYRSP…SKRSSRSVED (138 aa)). Tyr7 carries the post-translational modification Phosphotyrosine. Phosphoserine is present on residues Ser9, Ser49, Ser51, Ser67, Ser76, and Ser78. Basic and acidic residues-rich tracts occupy residues 26-56 (YSRE…DRIP) and 63-76 (EHRD…EERS). A compositionally biased stretch (basic residues) spans 88 to 116 (RSRHRRRSRERAPYRTRKHAHHCHKRRTR). Residues 117 to 130 (SCSSASSRSQQSSK) show a composition bias toward low complexity. A Phosphoserine modification is found at Ser135. The 317-residue stretch at 156–472 (YEIVGNLGEG…LAEALLHPFF (317 aa)) folds into the Protein kinase domain. ATP-binding positions include 162–170 (LGEGTFGKV) and Lys186. The active-site Proton acceptor is Asp283.

This sequence belongs to the protein kinase superfamily. CMGC Ser/Thr protein kinase family. Lammer subfamily. Autophosphorylates on all three types of residues. Present at high levels in testis and ovary. In testis, expression is restricted to elongated, maturing spermatozoa. Also present in spleen, brain, lung and liver (at protein level).

It localises to the nucleus. The protein resides in the cytoplasm. Its subcellular location is the cytoplasmic vesicle. The protein localises to the secretory vesicle. It is found in the acrosome. The enzyme catalyses L-seryl-[protein] + ATP = O-phospho-L-seryl-[protein] + ADP + H(+). It catalyses the reaction L-threonyl-[protein] + ATP = O-phospho-L-threonyl-[protein] + ADP + H(+). The catalysed reaction is L-tyrosyl-[protein] + ATP = O-phospho-L-tyrosyl-[protein] + ADP + H(+). Its activity is regulated as follows. Leucettine L41 inhibits its kinase activity and affects the regulation of alternative splicing mediated by phosphorylation of SR proteins. Its function is as follows. Dual specificity kinase acting on both serine/threonine and tyrosine-containing substrates. Phosphorylates serine- and arginine-rich (SR) proteins of the spliceosomal complex. May be a constituent of a network of regulatory mechanisms that enable SR proteins to control RNA splicing and can cause redistribution of SR proteins from speckles to a diffuse nucleoplasmic distribution. Phosphorylates SRSF1 and SRSF3. Regulates the alternative splicing of tissue factor (F3) pre-mRNA in endothelial cells. The polypeptide is Dual specificity protein kinase CLK3 (Mus musculus (Mouse)).